The following is a 753-amino-acid chain: Translation initiation factor IF-2 (753 aa).

Residues M1–A166 form a disordered region. Composition is skewed to low complexity over residues S19–A43, N71–R81, and T102–R122. Residues P133–L146 show a composition bias toward basic and acidic residues. The span at T153 to R162 shows a compositional bias: low complexity. Residues P249 to R418 form the tr-type G domain. Residues G258–T265 form a G1 region. Position 258–265 (G258–T265) interacts with GTP. Positions G283–H287 are G2. Residues D304 to G307 are G3. Residues D304–H308 and N358–D361 each bind GTP. Residues N358–D361 are G4. Residues S394 to R396 form a G5 region.

It belongs to the TRAFAC class translation factor GTPase superfamily. Classic translation factor GTPase family. IF-2 subfamily.

The protein localises to the cytoplasm. Functionally, one of the essential components for the initiation of protein synthesis. Protects formylmethionyl-tRNA from spontaneous hydrolysis and promotes its binding to the 30S ribosomal subunits. Also involved in the hydrolysis of GTP during the formation of the 70S ribosomal complex. The protein is Translation initiation factor IF-2 of Chloroflexus aggregans (strain MD-66 / DSM 9485).